A 1182-amino-acid polypeptide reads, in one-letter code: Tyrosine-protein kinase ABL2 (1182 aa).

Disordered stretches follow at residues 1-47 (MGQQ…TGFN) and 60-80 (EDGF…HRPY). Residue Gly2 is the site of N-myristoyl glycine attachment. The CAP stretch occupies residues 2 to 106 (GQQVGRVGEA…SKENLLGATE (105 aa)). The segment covering 20-30 (RGIRGSSAARP) has biased composition (low complexity). Ser97 is modified (phosphoserine). Residues 107–167 (SDPNLFVALY…PSNYITPVNS (61 aa)) form the SH3 domain. 6 positions are modified to phosphotyrosine: Tyr116, Tyr161, Tyr174, Tyr185, Tyr218, and Tyr231. One can recognise an SH2 domain in the interval 173–263 (WYHGPVSRSA…GLVTTLHYPA (91 aa)). Position 261 is a phosphotyrosine; by ABL1 and autocatalysis (Tyr261). Tyr272 is modified (phosphotyrosine; by autocatalysis). Position 275 is a phosphoserine (Ser275). A Protein kinase domain is found at 288–539 (ITMKHKLGGG…PSFAETHQAF (252 aa)). 294–302 (LGGGQYGEV) provides a ligand contact to ATP. 2 positions are modified to phosphotyrosine: Tyr299 and Tyr303. ATP contacts are provided by residues Lys317 and 362–368 (EYMPYGN). Asp409 acts as the Proton acceptor in catalysis. The Kinase activation loop signature appears at 427–451 (DFGLSRLMTGDTYTAHAGAKFPIKW). Residue Tyr439 is modified to Phosphotyrosine; by autocatalysis and SRC-type Tyr-kinases. Tyr459 carries the post-translational modification Phosphotyrosine. Tyr568 is subject to Phosphotyrosine; by autocatalysis. The disordered stretch occupies residues 611-641 (IRGAQASSGSPALPRKQRDKSPSSLLEDAKE). Residues Ser620, Ser631, and Ser633 each carry the phosphoserine modification. Asp647 carries the phosphotyrosine modification. The segment at 654–674 (SSFMKKRNAPTPPKRSSSFRE) is disordered. The residue at position 655 (Ser655) is a Phosphoserine. The Nuclear localization signal signature appears at 658–660 (KKR). Phosphotyrosine is present on residues Ala662 and Arg668. Phosphoserine occurs at positions 669, 670, and 671. Phosphotyrosine is present on residues Tyr683 and Tyr718. Tyr683 is subject to Phosphotyrosine; by autocatalysis. An F-actin-binding region spans residues 694-930 (SLQHADGFSF…PVLPTTHNHK (237 aa)). A disordered region spans residues 763–794 (LRAGKPTASDDTSKPFPRSNSTSSMSSGLPEQ). At Lys776 the chain carries N6-acetyllysine. Polar residues predominate over residues 780–791 (RSNSTSSMSSGL). The residue at position 783 (Ser783) is a Phosphoserine. The residue at position 800 (Thr800) is a Phosphothreonine. The segment covering 807–823 (RSKLQLERTVSTSSQPE) has biased composition (polar residues). The segment at 807–851 (RSKLQLERTVSTSSQPEENVDRANDMLPKKSEESAAPSRERPKAK) is disordered. Phosphoserine occurs at positions 817 and 820. Positions 825–849 (NVDRANDMLPKKSEESAAPSRERPK) are enriched in basic and acidic residues. 2 positions are modified to phosphoserine: Ser915 and Ser936. Residues 964–1024 (HQVTSSGDKD…TSETQEGGKK (61 aa)) form a disordered region. Residues 1010–1019 (TAGQSTSETQ) are compositionally biased toward polar residues. An F-actin-binding region spans residues 1020-1182 (EGGKKAALGA…VQEISDVVQR (163 aa)).

This sequence belongs to the protein kinase superfamily. Tyr protein kinase family. ABL subfamily. As to quaternary structure, interacts with PSMA7. Interacts with CTTN. Found in a complex with ABL1, ABL2, CRK and UNC119; leading to the inhibition of CRK phosphorylation by ABL kinases. Mg(2+) is required as a cofactor. The cofactor is Mn(2+). Post-translationally, phosphorylated at Tyr-261 by ABL1 in response to oxidative stress. Phosphorylated by PDGFRB. In terms of processing, polyubiquitinated. Polyubiquitination of ABL2 leads to degradation. Widely expressed.

It localises to the cytoplasm. The protein resides in the cytoskeleton. The enzyme catalyses L-tyrosyl-[protein] + ATP = O-phospho-L-tyrosyl-[protein] + ADP + H(+). With respect to regulation, stabilized in the inactive form by an association between the SH3 domain and the SH2-TK linker region, interactions of the N-terminal cap, and contributions from an N-terminal myristoyl group and phospholipids. Activated by autophosphorylation as well as by SRC-family kinase-mediated phosphorylation. Activated by RIN1 binding to the SH2 and SH3 domains. Inhibited by imatinib mesylate (Gleevec) which is used for the treatment of chronic myeloid leukemia (CML). Phosphatidylinositol 4,5-bisphosphate (PIP2), a highly abundant phosphoinositide known to regulate cytoskeletal and membrane proteins, inhibits the tyrosine kinase activity. Functionally, non-receptor tyrosine-protein kinase that plays an ABL1-overlapping role in key processes linked to cell growth and survival such as cytoskeleton remodeling in response to extracellular stimuli, cell motility and adhesion and receptor endocytosis. Coordinates actin remodeling through tyrosine phosphorylation of proteins controlling cytoskeleton dynamics like MYH10 (involved in movement); CTTN (involved in signaling); or TUBA1 and TUBB (microtubule subunits). Binds directly F-actin and regulates actin cytoskeletal structure through its F-actin-bundling activity. Involved in the regulation of cell adhesion and motility through phosphorylation of key regulators of these processes such as CRK, CRKL, DOK1 or ARHGAP35. Adhesion-dependent phosphorylation of ARHGAP35 promotes its association with RASA1, resulting in recruitment of ARHGAP35 to the cell periphery where it inhibits RHO. Phosphorylates multiple receptor tyrosine kinases like PDGFRB and other substrates which are involved in endocytosis regulation such as RIN1. In brain, may regulate neurotransmission by phosphorylating proteins at the synapse. ABL2 also acts as a regulator of multiple pathological signaling cascades during infection. Pathogens can highjack ABL2 kinase signaling to reorganize the host actin cytoskeleton for multiple purposes, like facilitating intracellular movement and host cell exit. Finally, functions as its own regulator through autocatalytic activity as well as through phosphorylation of its inhibitor, ABI1. Positively regulates chemokine-mediated T-cell migration, polarization, and homing to lymph nodes and immune-challenged tissues, potentially via activation of NEDD9/HEF1 and RAP1. This chain is Tyrosine-protein kinase ABL2 (ABL2), found in Homo sapiens (Human).